We begin with the raw amino-acid sequence, 148 residues long: MNQVVIYTDGACKGNPGPGGWGAVLRSGTLEKELFGGELGTTNNRMELMAVIQALGALKRPCQVALYLDSQYVRQGITEWIHGWKKKGWRTAAGQPVKNVELWQRLDELAHQAGHRIEWHWVRGHAGDPGNERADMLANKGVEQVLGR.

The RNase H type-1 domain occupies 1–143 (MNQVVIYTDG…ADMLANKGVE (143 aa)). Residues Asp9, Glu47, Asp69, and Asp135 each coordinate Mg(2+).

The protein belongs to the RNase H family. In terms of assembly, monomer. Mg(2+) is required as a cofactor.

It is found in the cytoplasm. It catalyses the reaction Endonucleolytic cleavage to 5'-phosphomonoester.. Functionally, endonuclease that specifically degrades the RNA of RNA-DNA hybrids. This Acidovorax sp. (strain JS42) protein is Ribonuclease H.